The following is an 83-amino-acid chain: MGKNTSFVLDEHYSAFIDGEIAAGRYRSASEVIRSALRLLEDRETQLRALREALEAGERSGSSTPFDFDGFLGRKRADASRGR.

A coiled-coil region spans residues 33–60 (IRSALRLLEDRETQLRALREALEAGERS). The tract at residues 54 to 83 (LEAGERSGSSTPFDFDGFLGRKRADASRGR) is disordered.

The protein belongs to the ParD antitoxin family.

Antitoxin component of a type II toxin-antitoxin (TA) system. The polypeptide is Antitoxin ParD1 (parD1) (Mycobacterium tuberculosis (strain CDC 1551 / Oshkosh)).